A 75-amino-acid chain; its full sequence is Probable protein BRICK1-B (75 aa).

A coiled-coil region spans residues 41–72 (MSCRSRLATLNEKLTTLERRIEYIEARVTKGE).

Belongs to the BRK1 family.

The protein resides in the cytoplasm. It is found in the cytoskeleton. In terms of biological role, involved in regulation of actin and microtubule organization. Part of a WAVE complex that activates the Arp2/3 complex. This is Probable protein BRICK1-B (brk1-b) from Xenopus laevis (African clawed frog).